Consider the following 420-residue polypeptide: D-tagatose-1,6-bisphosphate aldolase subunit GatZ (420 aa).

Belongs to the GatZ/KbaZ family. GatZ subfamily. In terms of assembly, forms a complex with GatY.

It participates in carbohydrate metabolism; D-tagatose 6-phosphate degradation; D-glyceraldehyde 3-phosphate and glycerone phosphate from D-tagatose 6-phosphate: step 2/2. Its function is as follows. Component of the tagatose-1,6-bisphosphate aldolase GatYZ that is required for full activity and stability of the Y subunit. Could have a chaperone-like function for the proper and stable folding of GatY. When expressed alone, GatZ does not show any aldolase activity. Is involved in the catabolism of galactitol. The sequence is that of D-tagatose-1,6-bisphosphate aldolase subunit GatZ from Escherichia coli O139:H28 (strain E24377A / ETEC).